Reading from the N-terminus, the 556-residue chain is Formate--tetrahydrofolate ligase 1 (556 aa).

65 to 72 lines the ATP pocket; it reads TPAGEGKS.

This sequence belongs to the formate--tetrahydrofolate ligase family.

The catalysed reaction is (6S)-5,6,7,8-tetrahydrofolate + formate + ATP = (6R)-10-formyltetrahydrofolate + ADP + phosphate. It functions in the pathway one-carbon metabolism; tetrahydrofolate interconversion. This Streptococcus pyogenes serotype M2 (strain MGAS10270) protein is Formate--tetrahydrofolate ligase 1.